Here is a 297-residue protein sequence, read N- to C-terminus: N-acetylmuramic acid 6-phosphate etherase (297 aa).

Residues Ala55–Lys218 form the SIS domain. Catalysis depends on Glu83, which acts as the Proton donor. The active site involves Glu114.

This sequence belongs to the GCKR-like family. MurNAc-6-P etherase subfamily. Homodimer.

The enzyme catalyses N-acetyl-D-muramate 6-phosphate + H2O = N-acetyl-D-glucosamine 6-phosphate + (R)-lactate. It participates in amino-sugar metabolism; 1,6-anhydro-N-acetylmuramate degradation. Its pathway is amino-sugar metabolism; N-acetylmuramate degradation. The protein operates within cell wall biogenesis; peptidoglycan recycling. Its function is as follows. Specifically catalyzes the cleavage of the D-lactyl ether substituent of MurNAc 6-phosphate, producing GlcNAc 6-phosphate and D-lactate. Together with AnmK, is also required for the utilization of anhydro-N-acetylmuramic acid (anhMurNAc) either imported from the medium or derived from its own cell wall murein, and thus plays a role in cell wall recycling. The polypeptide is N-acetylmuramic acid 6-phosphate etherase (Salmonella agona (strain SL483)).